The chain runs to 505 residues: AMP phosphorylase (505 aa).

AMP contacts are provided by residues Gly170, 196–201 (SRAITS), and Thr205. Catalysis depends on Asp258, which acts as the Proton donor. Residues Ser266 and Lys290 each coordinate AMP.

Belongs to the thymidine/pyrimidine-nucleoside phosphorylase family. Type 2 subfamily.

The catalysed reaction is AMP + phosphate = alpha-D-ribose 1,5-bisphosphate + adenine. The enzyme catalyses CMP + phosphate = cytosine + alpha-D-ribose 1,5-bisphosphate. It catalyses the reaction UMP + phosphate = alpha-D-ribose 1,5-bisphosphate + uracil. In terms of biological role, catalyzes the conversion of AMP and phosphate to adenine and ribose 1,5-bisphosphate (R15P). Exhibits phosphorylase activity toward CMP and UMP in addition to AMP. Functions in an archaeal AMP degradation pathway, together with R15P isomerase and RubisCO. The protein is AMP phosphorylase of Methanococcus vannielii (strain ATCC 35089 / DSM 1224 / JCM 13029 / OCM 148 / SB).